The sequence spans 361 residues: Probable purine permease 13 (361 aa).

The next 10 helical transmembrane spans lie at 35 to 55 (WILV…AVLL), 68 to 88 (WIST…LCFL), 103 to 123 (LVWI…LYSF), 129 to 151 (SAST…SYYI), 156 to 176 (ITCL…LVSL), 192 to 212 (LIGC…LSLM), 238 to 258 (VASC…LLSV), 268 to 288 (VIYV…SVGA), 289 to 309 (VALI…LSLI), and 323 to 343 (LTEV…FYIY).

The protein belongs to the purine permeases (TC 2.A.7.14) family.

The protein localises to the membrane. In Arabidopsis thaliana (Mouse-ear cress), this protein is Probable purine permease 13 (PUP13).